The chain runs to 640 residues: Biosynthetic arginine decarboxylase (640 aa).

N6-(pyridoxal phosphate)lysine is present on lysine 109. 291 to 301 (LDVGGGLGVDY) serves as a coordination point for substrate.

This sequence belongs to the Orn/Lys/Arg decarboxylase class-II family. SpeA subfamily. Mg(2+) serves as cofactor. Pyridoxal 5'-phosphate is required as a cofactor.

The catalysed reaction is L-arginine + H(+) = agmatine + CO2. It participates in amine and polyamine biosynthesis; agmatine biosynthesis; agmatine from L-arginine: step 1/1. Its function is as follows. Catalyzes the biosynthesis of agmatine from arginine. The polypeptide is Biosynthetic arginine decarboxylase (Synechococcus sp. (strain RCC307)).